The following is a 252-amino-acid chain: 3-dehydroquinate dehydratase (252 aa).

Residues Ser-21, 46 to 48 (EWR), and Arg-82 contribute to the 3-dehydroquinate site. His-143 acts as the Proton donor/acceptor in catalysis. Residue Lys-170 is the Schiff-base intermediate with substrate of the active site. 3-dehydroquinate-binding residues include Arg-213, Ser-232, and Gln-236.

It belongs to the type-I 3-dehydroquinase family. As to quaternary structure, homodimer.

It catalyses the reaction 3-dehydroquinate = 3-dehydroshikimate + H2O. It functions in the pathway metabolic intermediate biosynthesis; chorismate biosynthesis; chorismate from D-erythrose 4-phosphate and phosphoenolpyruvate: step 3/7. Its function is as follows. Involved in the third step of the chorismate pathway, which leads to the biosynthesis of aromatic amino acids. Catalyzes the cis-dehydration of 3-dehydroquinate (DHQ) and introduces the first double bond of the aromatic ring to yield 3-dehydroshikimate. The sequence is that of 3-dehydroquinate dehydratase from Escherichia coli O7:K1 (strain IAI39 / ExPEC).